Reading from the N-terminus, the 865-residue chain is Protein translocase subunit SecA (865 aa).

ATP is bound by residues glutamine 93, 111 to 115 (GEGKT), and aspartate 501. Zn(2+)-binding residues include cysteine 841, cysteine 843, cysteine 852, and cysteine 853.

The protein belongs to the SecA family. In terms of assembly, monomer and homodimer. Part of the essential Sec protein translocation apparatus which comprises SecA, SecYEG and auxiliary proteins SecDF-YajC and YidC. It depends on Zn(2+) as a cofactor.

The protein localises to the cell inner membrane. It localises to the cytoplasm. The catalysed reaction is ATP + H2O + cellular proteinSide 1 = ADP + phosphate + cellular proteinSide 2.. Part of the Sec protein translocase complex. Interacts with the SecYEG preprotein conducting channel. Has a central role in coupling the hydrolysis of ATP to the transfer of proteins into and across the cell membrane, serving as an ATP-driven molecular motor driving the stepwise translocation of polypeptide chains across the membrane. The polypeptide is Protein translocase subunit SecA (Helicobacter pylori (strain Shi470)).